The following is a 365-amino-acid chain: Geissoschizine synthase (365 aa).

Cys-51 is a Zn(2+) binding site. NADP(+) is bound at residue Asn-52. Residues His-73, Glu-74, Cys-104, Cys-107, Cys-110, Cys-118, and Cys-169 each coordinate Zn(2+). NADP(+) contacts are provided by Leu-195, Gly-197, Leu-198, Ser-217, Thr-218, Ser-219, Lys-222, Arg-262, Val-281, Ala-283, Ser-305, Thr-307, and Arg-352.

The protein belongs to the zinc-containing alcohol dehydrogenase family. Class-III subfamily. As to quaternary structure, homodimer. The cofactor is Zn(2+). In terms of tissue distribution, mainly expressed in roots and, to a lower level, in leaves.

It carries out the reaction (19E)-geissoschizine + NADP(+) = 4,21-dehydrogeissoschizine + NADPH. Its pathway is alkaloid biosynthesis; ajmaline biosynthesis. Alcohol dehydrogenase involved in the biosynthesis of ajmaline-type monoterpenoid indole alkaloids (MIAs) natural products, important plant-derived pharmaceuticals used in the therapy of heart disorders. Catalyzes iminium reduction on 4,21-dehydrogeissoschizine to produce 19E-geissoschizine, precursor of vomilenine, an intermediate chemical in the biosynthesis of ajmaline. This Rauvolfia serpentina (Serpentine wood) protein is Geissoschizine synthase.